We begin with the raw amino-acid sequence, 69 residues long: MGKVYKKVELVGTSEEGLEAAIQAALARARKTLRHLDWFEVKEIRGTIGEAGVKEYQVVLEVGFRLEET.

An FMN-binding site is contributed by 3-5; that stretch reads KVY. Residues K6, R28, and 32–34 each bind CoA; that span reads TLR. Positions 37, 38, 45, 57, and 65 each coordinate FMN. 65–67 is a binding site for CoA; that stretch reads RLE.

This sequence belongs to the dodecin family. In terms of assembly, homododecamer; four homotrimers assemble to form a dodecameric hollow sphere with an outer diameter of about 60 Angstroms. Flavin dimers are bound between subunits with a stoichiometry of 6 flavin dimers per dodecamer. Besides, trimeric coenzyme A molecules can be bound between subunits. A dodecamer can bind simultaneously 12 flavin and 12 coenzyme A molecules.

In terms of biological role, may function as storage protein that sequesters various flavins and other cofactors, thereby protecting the cell against undesirable reactions mediated by the free cofactors. Binds and sequesters FMN, FAD, lumiflavin and lumichrome, and can also bind coenzyme A. The chain is Dodecin from Thermus thermophilus (strain ATCC 27634 / DSM 579 / HB8).